We begin with the raw amino-acid sequence, 330 residues long: ADP-L-glycero-D-manno-heptose-6-epimerase (330 aa).

NADP(+) contacts are provided by residues phenylalanine 10 to isoleucine 11, aspartate 31 to aspartate 32, lysine 38, lysine 53, glutamine 74 to serine 78, and asparagine 91. Residue tyrosine 138 is the Proton acceptor of the active site. Residue lysine 142 coordinates NADP(+). Asparagine 167 lines the substrate pocket. Residues valine 168 and lysine 176 each coordinate NADP(+). Residue lysine 176 is the Proton acceptor of the active site. Substrate is bound by residues arginine 178, histidine 185, phenylalanine 199–tryptophan 202, arginine 212, and tyrosine 291.

This sequence belongs to the NAD(P)-dependent epimerase/dehydratase family. HldD subfamily. As to quaternary structure, homopentamer. Requires NADP(+) as cofactor.

The enzyme catalyses ADP-D-glycero-beta-D-manno-heptose = ADP-L-glycero-beta-D-manno-heptose. It participates in nucleotide-sugar biosynthesis; ADP-L-glycero-beta-D-manno-heptose biosynthesis; ADP-L-glycero-beta-D-manno-heptose from D-glycero-beta-D-manno-heptose 7-phosphate: step 4/4. Its function is as follows. Catalyzes the interconversion between ADP-D-glycero-beta-D-manno-heptose and ADP-L-glycero-beta-D-manno-heptose via an epimerization at carbon 6 of the heptose. This Bordetella petrii (strain ATCC BAA-461 / DSM 12804 / CCUG 43448) protein is ADP-L-glycero-D-manno-heptose-6-epimerase.